The sequence spans 205 residues: uncharacterized protein (205 aa).

The first 18 residues, 1 to 18 (MKASLALLSLLTAFTSHS), serve as a signal peptide directing secretion.

This is an uncharacterized protein from Escherichia coli (strain K12).